The chain runs to 488 residues: Bifunctional protein GlmU (488 aa).

The interval M1 to R237 is pyrophosphorylase. UDP-N-acetyl-alpha-D-glucosamine-binding positions include L13–G16, K27, Q82, G87–T88, S110–D112, G149, E164, N179, and N235. Position 112 (D112) interacts with Mg(2+). N235 contributes to the Mg(2+) binding site. A linker region spans residues V238–A258. Positions G259 to S488 are N-acetyltransferase. The UDP-N-acetyl-alpha-D-glucosamine site is built by R341 and K359. Catalysis depends on H371, which acts as the Proton acceptor. Y374 and N385 together coordinate UDP-N-acetyl-alpha-D-glucosamine. Residues A388, N394–Y395, S413, A431, and R448 each bind acetyl-CoA. The tract at residues A459–S488 is disordered. Over residues R478–S488 the composition is skewed to basic residues.

It in the N-terminal section; belongs to the N-acetylglucosamine-1-phosphate uridyltransferase family. The protein in the C-terminal section; belongs to the transferase hexapeptide repeat family. In terms of assembly, homotrimer. Mg(2+) serves as cofactor.

The protein localises to the cytoplasm. It catalyses the reaction alpha-D-glucosamine 1-phosphate + acetyl-CoA = N-acetyl-alpha-D-glucosamine 1-phosphate + CoA + H(+). The enzyme catalyses N-acetyl-alpha-D-glucosamine 1-phosphate + UTP + H(+) = UDP-N-acetyl-alpha-D-glucosamine + diphosphate. It functions in the pathway nucleotide-sugar biosynthesis; UDP-N-acetyl-alpha-D-glucosamine biosynthesis; N-acetyl-alpha-D-glucosamine 1-phosphate from alpha-D-glucosamine 6-phosphate (route II): step 2/2. Its pathway is nucleotide-sugar biosynthesis; UDP-N-acetyl-alpha-D-glucosamine biosynthesis; UDP-N-acetyl-alpha-D-glucosamine from N-acetyl-alpha-D-glucosamine 1-phosphate: step 1/1. The protein operates within bacterial outer membrane biogenesis; LPS lipid A biosynthesis. In terms of biological role, catalyzes the last two sequential reactions in the de novo biosynthetic pathway for UDP-N-acetylglucosamine (UDP-GlcNAc). The C-terminal domain catalyzes the transfer of acetyl group from acetyl coenzyme A to glucosamine-1-phosphate (GlcN-1-P) to produce N-acetylglucosamine-1-phosphate (GlcNAc-1-P), which is converted into UDP-GlcNAc by the transfer of uridine 5-monophosphate (from uridine 5-triphosphate), a reaction catalyzed by the N-terminal domain. In Anaeromyxobacter sp. (strain K), this protein is Bifunctional protein GlmU.